Here is a 557-residue protein sequence, read N- to C-terminus: Fanconi anemia group C protein homolog (557 aa).

Belongs to the multisubunit FA complex composed of FANCA, FANCB, FANCC, FANCE, FANCF, FANCG, FANCL/PHF9 and FANCM. This complex may also include HSP70. Interacts with ZBTB32. Upon IFNG induction, interacts with STAT1. Interacts with CDK1. Interacts with EIF2AK2.

It is found in the nucleus. It localises to the cytoplasm. Its function is as follows. DNA repair protein that may operate in a postreplication repair or a cell cycle checkpoint function. May be implicated in interstrand DNA cross-link repair and in the maintenance of normal chromosome stability. Upon IFNG induction, may facilitate STAT1 activation by recruiting STAT1 to IFNGR1. This is Fanconi anemia group C protein homolog (Fancc) from Rattus norvegicus (Rat).